The primary structure comprises 120 residues: U13-lycotoxin-Ls1d (120 aa).

Residues Met-1–Cys-16 form the signal peptide. Positions Phe-17–Arg-54 are excised as a propeptide. 4 disulfide bridges follow: Cys-56/Cys-70, Cys-63/Cys-76, Cys-69/Cys-87, and Cys-78/Cys-85. An Agouti domain is found at Cys-56 to Cys-95.

It belongs to the neurotoxin 05 (agouti) family. Contains 6 disulfide bonds. In terms of tissue distribution, expressed by the venom gland.

The protein localises to the secreted. This Lycosa singoriensis (Wolf spider) protein is U13-lycotoxin-Ls1d.